The sequence spans 307 residues: 4-diphosphocytidyl-2-C-methyl-D-erythritol kinase (307 aa).

K14 is an active-site residue. 107–117 (PVAGGMAGGSA) contributes to the ATP binding site. D149 is an active-site residue.

It belongs to the GHMP kinase family. IspE subfamily.

It catalyses the reaction 4-CDP-2-C-methyl-D-erythritol + ATP = 4-CDP-2-C-methyl-D-erythritol 2-phosphate + ADP + H(+). The protein operates within isoprenoid biosynthesis; isopentenyl diphosphate biosynthesis via DXP pathway; isopentenyl diphosphate from 1-deoxy-D-xylulose 5-phosphate: step 3/6. Catalyzes the phosphorylation of the position 2 hydroxy group of 4-diphosphocytidyl-2C-methyl-D-erythritol. This Thermobifida fusca (strain YX) protein is 4-diphosphocytidyl-2-C-methyl-D-erythritol kinase.